The chain runs to 750 residues: Serine/threonine-protein kinase GE16371 (750 aa).

Doublecortin domains are found at residues 159–245 (LRIK…VEYN) and 315–398 (RIVT…AEDF). A Protein kinase domain is found at 479–737 (YTLGKIIGDG…SEDILDHYWT (259 aa)). ATP-binding positions include 485-493 (IGDGNFAIV) and K508. The active-site Proton acceptor is the D600.

Belongs to the protein kinase superfamily. CAMK Ser/Thr protein kinase family. CaMK subfamily.

It carries out the reaction L-seryl-[protein] + ATP = O-phospho-L-seryl-[protein] + ADP + H(+). It catalyses the reaction L-threonyl-[protein] + ATP = O-phospho-L-threonyl-[protein] + ADP + H(+). The protein is Serine/threonine-protein kinase GE16371 of Drosophila yakuba (Fruit fly).